The chain runs to 1103 residues: Isoleucine--tRNA ligase (1103 aa).

The tract at residues 1–25 (MSENVYPKANEGGETAHVAPNPSFP) is disordered. The short motif at 65-75 (PFANGLPHYGH) is the 'HIGH' region element. A 'KMSKS' region motif is present at residues 649–653 (KMSKH). An ATP-binding site is contributed by lysine 652.

This sequence belongs to the class-I aminoacyl-tRNA synthetase family. IleS type 2 subfamily. In terms of assembly, monomer. The cofactor is Zn(2+).

The protein resides in the cytoplasm. The enzyme catalyses tRNA(Ile) + L-isoleucine + ATP = L-isoleucyl-tRNA(Ile) + AMP + diphosphate. Catalyzes the attachment of isoleucine to tRNA(Ile). As IleRS can inadvertently accommodate and process structurally similar amino acids such as valine, to avoid such errors it has two additional distinct tRNA(Ile)-dependent editing activities. One activity is designated as 'pretransfer' editing and involves the hydrolysis of activated Val-AMP. The other activity is designated 'posttransfer' editing and involves deacylation of mischarged Val-tRNA(Ile). The sequence is that of Isoleucine--tRNA ligase from Bifidobacterium longum (strain NCC 2705).